The chain runs to 499 residues: Aspartyl/glutamyl-tRNA(Asn/Gln) amidotransferase subunit B (499 aa).

Belongs to the GatB/GatE family. GatB subfamily. As to quaternary structure, heterotrimer of A, B and C subunits.

It catalyses the reaction L-glutamyl-tRNA(Gln) + L-glutamine + ATP + H2O = L-glutaminyl-tRNA(Gln) + L-glutamate + ADP + phosphate + H(+). It carries out the reaction L-aspartyl-tRNA(Asn) + L-glutamine + ATP + H2O = L-asparaginyl-tRNA(Asn) + L-glutamate + ADP + phosphate + 2 H(+). In terms of biological role, allows the formation of correctly charged Asn-tRNA(Asn) or Gln-tRNA(Gln) through the transamidation of misacylated Asp-tRNA(Asn) or Glu-tRNA(Gln) in organisms which lack either or both of asparaginyl-tRNA or glutaminyl-tRNA synthetases. The reaction takes place in the presence of glutamine and ATP through an activated phospho-Asp-tRNA(Asn) or phospho-Glu-tRNA(Gln). This is Aspartyl/glutamyl-tRNA(Asn/Gln) amidotransferase subunit B from Salinispora tropica (strain ATCC BAA-916 / DSM 44818 / JCM 13857 / NBRC 105044 / CNB-440).